The chain runs to 240 residues: UDP-2,3-diacylglucosamine hydrolase (240 aa).

Residues Asp-7, His-9, Asp-40, Asn-78, and His-113 each contribute to the Mn(2+) site. 78–79 (NR) serves as a coordination point for substrate. The substrate site is built by Asp-121, Ser-159, Lys-166, and His-194. Mn(2+) contacts are provided by His-194 and His-196.

It belongs to the LpxH family. The cofactor is Mn(2+).

Its subcellular location is the cell inner membrane. The catalysed reaction is UDP-2-N,3-O-bis[(3R)-3-hydroxytetradecanoyl]-alpha-D-glucosamine + H2O = 2-N,3-O-bis[(3R)-3-hydroxytetradecanoyl]-alpha-D-glucosaminyl 1-phosphate + UMP + 2 H(+). It participates in glycolipid biosynthesis; lipid IV(A) biosynthesis; lipid IV(A) from (3R)-3-hydroxytetradecanoyl-[acyl-carrier-protein] and UDP-N-acetyl-alpha-D-glucosamine: step 4/6. In terms of biological role, hydrolyzes the pyrophosphate bond of UDP-2,3-diacylglucosamine to yield 2,3-diacylglucosamine 1-phosphate (lipid X) and UMP by catalyzing the attack of water at the alpha-P atom. Involved in the biosynthesis of lipid A, a phosphorylated glycolipid that anchors the lipopolysaccharide to the outer membrane of the cell. The sequence is that of UDP-2,3-diacylglucosamine hydrolase from Pseudomonas putida (strain ATCC 47054 / DSM 6125 / CFBP 8728 / NCIMB 11950 / KT2440).